A 280-amino-acid chain; its full sequence is uncharacterized protein (280 aa).

Asn75, Asn98, Asn107, Asn143, Asn158, Asn170, Asn192, Asn207, Asn224, and Asn230 each carry an N-linked (GlcNAc...) asparagine; by host glycan. The helical transmembrane segment at 235 to 255 (AFTYGSWGVAMLLFAAVMVLV) threads the bilayer.

This sequence belongs to the RL11 family.

The protein resides in the host membrane. This is an uncharacterized protein from Human cytomegalovirus (strain Merlin) (HHV-5).